The following is a 235-amino-acid chain: MPEGVPCGRRGAMLNVGLTGSISCGKSTVARMLEGKGAFIIDFDRLAHDVEEPDKPAWRGIVDTFGPDVLREDRTIDRARLGTLVFADRRKLEKLNEIVHPAVFEAWRRSVEEIRGVRPDAIVVSDFPLLIELGKQNDYDVILLVYIPPQEQIRRLILRNGYSPEEAIQRVNSQMSIEDKIDFADIIVNNAGPREQTQAQIDKIWTQLLKKERLQRKSAASSFQTGTIHKEREVG.

Residues 15–219 enclose the DPCK domain; that stretch reads NVGLTGSISC…KKERLQRKSA (205 aa). 23 to 28 is a binding site for ATP; the sequence is SCGKST.

It belongs to the CoaE family.

It is found in the cytoplasm. It carries out the reaction 3'-dephospho-CoA + ATP = ADP + CoA + H(+). It participates in cofactor biosynthesis; coenzyme A biosynthesis; CoA from (R)-pantothenate: step 5/5. Its function is as follows. Catalyzes the phosphorylation of the 3'-hydroxyl group of dephosphocoenzyme A to form coenzyme A. In Syntrophus aciditrophicus (strain SB), this protein is Dephospho-CoA kinase.